Here is a 699-residue protein sequence, read N- to C-terminus: Endogenous retrovirus group K member 113 Env polyprotein (699 aa).

Positions M1 to P47 are disordered. The signal sequence occupies residues M1–S89. A compositionally biased stretch (basic residues) spans A10–R20. The Extracellular segment spans residues L90 to T632. 7 N-linked (GlcNAc...) asparagine glycosylation sites follow: N100, N128, N153, N274, N355, N372, and N461. A fusion peptide region spans residues F466–V486. N-linked (GlcNAc...) asparagine glycans are attached at residues N507, N554, N566, and N585. The chain crosses the membrane as a helical span at residues I633–L653. The Cytoplasmic segment spans residues V654–V699.

This sequence belongs to the beta type-B retroviral envelope protein family. HERV class-II K(HML-2) env subfamily. In terms of assembly, the surface (SU) and transmembrane (TM) proteins form a heterodimer. SU and TM are attached by noncovalent interactions or by a labile interchain disulfide bond. In terms of processing, specific enzymatic cleavages in vivo yield the mature SU and TM proteins.

Its subcellular location is the cell membrane. The protein localises to the virion. In terms of biological role, retroviral envelope proteins mediate receptor recognition and membrane fusion during early infection. Endogenous envelope proteins may have kept, lost or modified their original function during evolution. This endogenous envelope protein has lost its original fusogenic properties. Its function is as follows. SU mediates receptor recognition. TM anchors the envelope heterodimer to the viral membrane through one transmembrane domain. The other hydrophobic domain, called fusion peptide, mediates fusion of the viral membrane with the target cell membrane. The chain is Endogenous retrovirus group K member 113 Env polyprotein (HERVK_113) from Homo sapiens (Human).